Here is a 1439-residue protein sequence, read N- to C-terminus: DNA-directed RNA polymerase subunit beta' (1439 aa).

Cys70, Cys72, Cys85, and Cys88 together coordinate Zn(2+). 3 residues coordinate Mg(2+): Asp504, Asp506, and Asp508. Zn(2+) contacts are provided by Cys862, Cys936, Cys943, and Cys946.

Belongs to the RNA polymerase beta' chain family. As to quaternary structure, the RNAP catalytic core consists of 2 alpha, 1 beta, 1 beta' and 1 omega subunit. When a sigma factor is associated with the core the holoenzyme is formed, which can initiate transcription. The cofactor is Mg(2+). Zn(2+) is required as a cofactor.

The enzyme catalyses RNA(n) + a ribonucleoside 5'-triphosphate = RNA(n+1) + diphosphate. Functionally, DNA-dependent RNA polymerase catalyzes the transcription of DNA into RNA using the four ribonucleoside triphosphates as substrates. The chain is DNA-directed RNA polymerase subunit beta' from Gluconobacter oxydans (strain 621H) (Gluconobacter suboxydans).